A 282-amino-acid chain; its full sequence is U1 small nuclear ribonucleoprotein A (282 aa).

N-acetylalanine is present on Ala2. Residues 10–89 (HTIYINNLNE…KPMRIQYAKT (80 aa)) enclose the RRM 1 domain. The residue at position 60 (Lys60) is an N6-acetyllysine. The tract at residues 101-141 (FVERDRKREKRKPKSQETPAAKKAVQGGAAAPVVGTVQGPV) is disordered. The span at 119 to 141 (PAAKKAVQGGAAAPVVGTVQGPV) shows a compositional bias: low complexity. Position 152 is an omega-N-methylarginine (Arg152). Positions 208 to 282 (HILFLTNLPE…NAMKISFAKK (75 aa)) constitute an RRM 2 domain.

Belongs to the RRM U1 A/B'' family. As to quaternary structure, U1 snRNP is composed of the 7 core Sm proteins SNRPB, SNRPD1, SNRPD2, SNRPD3, SNRPE, SNRPF and SNRPG that assemble in a heptameric protein ring on the Sm site of the small nuclear RNA to form the core snRNP, and at least three U1 snRNP-specific proteins SNRNP70/U1-70K, SNRPA/U1-A and SNRPC/U1-C. Interacts with SFPQ; component of a snRNP-free complex with SFPQ.

It localises to the nucleus. Component of the spliceosomal U1 snRNP, which is essential for recognition of the pre-mRNA 5' splice-site and the subsequent assembly of the spliceosome. U1 snRNP is the first snRNP to interact with pre-mRNA. This interaction is required for the subsequent binding of U2 snRNP and the U4/U6/U5 tri-snRNP. SNRPA binds stem loop II of U1 snRNA. In a snRNP-free form (SF-A) may be involved in coupled pre-mRNA splicing and polyadenylation process. May bind preferentially to the 5'-UGCAC-3' motif on RNAs. The protein is U1 small nuclear ribonucleoprotein A (SNRPA) of Bos taurus (Bovine).